An 88-amino-acid polypeptide reads, in one-letter code: MANIKSQIKRNKTNEKARLRNKAVKSSLKTAIRKAREAVVAGDVEKATTAVRDASRQLDKAVSKGVIHKNAAANKKSALASKVASLQA.

The interval 1 to 27 (MANIKSQIKRNKTNEKARLRNKAVKSS) is disordered.

The protein belongs to the bacterial ribosomal protein bS20 family.

Functionally, binds directly to 16S ribosomal RNA. The protein is Small ribosomal subunit protein bS20 of Streptomyces griseus subsp. griseus (strain JCM 4626 / CBS 651.72 / NBRC 13350 / KCC S-0626 / ISP 5235).